The sequence spans 185 residues: Dense granule protein 2 (185 aa).

Positions 1 to 23 (MFAVKHCLLVVAVGALVNVSVRA) are cleaved as a signal peptide. An N-linked (GlcNAc...) asparagine glycan is attached at asparagine 18. 2 disordered regions span residues 41 to 75 (GKPL…SQRA) and 142 to 185 (ANVE…DFSQ). The segment covering 43–66 (PLDERAVGGKGEHTPPLPDERQQE) has biased composition (basic and acidic residues).

May also be O-glycosylated. Post-translationally, the N-terminus is blocked.

The protein localises to the parasitophorous vacuole. Its function is as follows. Major granular component involved in excreted-secreted antigen (ESA) immunity. Possibly acts in conjunction with GRA1. The chain is Dense granule protein 2 (GRA2) from Toxoplasma gondii.